We begin with the raw amino-acid sequence, 150 residues long: Large ribosomal subunit protein uL13 (150 aa).

This sequence belongs to the universal ribosomal protein uL13 family. In terms of assembly, part of the 50S ribosomal subunit.

In terms of biological role, this protein is one of the early assembly proteins of the 50S ribosomal subunit, although it is not seen to bind rRNA by itself. It is important during the early stages of 50S assembly. The sequence is that of Large ribosomal subunit protein uL13 from Sulfurihydrogenibium sp. (strain YO3AOP1).